Here is a 208-residue protein sequence, read N- to C-terminus: Uracil phosphoribosyltransferase (208 aa).

Residues R78, R103, and 130 to 138 (DPMLATGGS) contribute to the 5-phospho-alpha-D-ribose 1-diphosphate site. Residues I193 and 198-200 (GDA) contribute to the uracil site. Position 199 (D199) interacts with 5-phospho-alpha-D-ribose 1-diphosphate.

Belongs to the UPRTase family. The cofactor is Mg(2+).

It carries out the reaction UMP + diphosphate = 5-phospho-alpha-D-ribose 1-diphosphate + uracil. Its pathway is pyrimidine metabolism; UMP biosynthesis via salvage pathway; UMP from uracil: step 1/1. Allosterically activated by GTP. Catalyzes the conversion of uracil and 5-phospho-alpha-D-ribose 1-diphosphate (PRPP) to UMP and diphosphate. The chain is Uracil phosphoribosyltransferase from Shewanella denitrificans (strain OS217 / ATCC BAA-1090 / DSM 15013).